Reading from the N-terminus, the 320-residue chain is Malate dehydrogenase (320 aa).

NAD(+)-binding positions include Gly10 to Gly15 and Asp34. Residues Arg83 and Arg89 each coordinate substrate. NAD(+) is bound by residues Asn96 and Ile119–Asn121. Substrate contacts are provided by Asn121 and Arg152. His176 serves as the catalytic Proton acceptor.

Belongs to the LDH/MDH superfamily. MDH type 3 family.

It catalyses the reaction (S)-malate + NAD(+) = oxaloacetate + NADH + H(+). Its function is as follows. Catalyzes the reversible oxidation of malate to oxaloacetate. The polypeptide is Malate dehydrogenase (Methylorubrum extorquens (strain CM4 / NCIMB 13688) (Methylobacterium extorquens)).